A 286-amino-acid polypeptide reads, in one-letter code: Cytochrome bo(3) ubiquinol oxidase subunit 2 (286 aa).

Positions 1–24 are cleaved as a signal peptide; it reads MQFIKYKSYILKFLLVSCIFCING. Cys-25 carries the N-palmitoyl cysteine lipid modification. Cys-25 carries the S-diacylglycerol cysteine lipid modification. Over 25-44 the chain is Extracellular; sequence CDCTILCPNGLIAQEQRFVL. A helical membrane pass occupies residues 45 to 67; that stretch reads FVSFFTMLLIIIPVIFMTIFFVL. Residues 68–85 lie on the Cytoplasmic side of the membrane; that stretch reads RYRESNFSKTYDPKWSHS. A helical transmembrane segment spans residues 86–108; that stretch reads NIIELLIWGIPIIIIVFLSIFSW. Over 109–286 the chain is Extracellular; that stretch reads KSVHDLDPKK…VIANVLKISL (178 aa).

It belongs to the cytochrome c oxidase subunit 2 family. In terms of assembly, heterooctamer of two A chains, two B chains, two C chains and two D chains.

The protein localises to the cell membrane. Its function is as follows. Cytochrome bo(3) ubiquinol terminal oxidase is the component of the aerobic respiratory chain of E.coli that predominates when cells are grown at high aeration. Has proton pump activity across the membrane in addition to electron transfer, pumping 2 protons/electron. The polypeptide is Cytochrome bo(3) ubiquinol oxidase subunit 2 (cyoA) (Buchnera aphidicola subsp. Baizongia pistaciae (strain Bp)).